A 171-amino-acid chain; its full sequence is MTGLLYLQNSSGYNDCYFKTESLVDFLYRTLFIDKGSYLGVSFITAAEMRDLKIKHFGVNEDSDVLSFPIDEIAPGSENSLVYGVLGDIVVCPETVMRQAVRHPFEHEIYLLVVHGFLHLLGFDHSDAPSKKEMFSLQAKLIEDFFALENLGTPSEEITITPDLRPSLGRI.

Residues H115, H119, and H125 each contribute to the Zn(2+) site.

Belongs to the endoribonuclease YbeY family. The cofactor is Zn(2+).

Its subcellular location is the cytoplasm. Functionally, single strand-specific metallo-endoribonuclease involved in late-stage 70S ribosome quality control and in maturation of the 3' terminus of the 16S rRNA. This chain is Endoribonuclease YbeY, found in Tropheryma whipplei (strain TW08/27) (Whipple's bacillus).